A 119-amino-acid chain; its full sequence is Non-structural protein 3b (119 aa).

A DRBM domain is found at 2-83 (DYVSLLNQFW…ARLICEQLQA (82 aa)).

As to quaternary structure, interacts with host RUNX1 isoform b.

It is found in the host nucleus. It localises to the host nucleolus. The protein resides in the host mitochondrion. Its function is as follows. Induces host cell G0/G1 arrest and apoptosis. The chain is Non-structural protein 3b from Tylonycteris pachypus (Lesser bamboo bat).